The chain runs to 245 residues: tRNA1(Val) (adenine(37)-N6)-methyltransferase (245 aa).

It belongs to the methyltransferase superfamily. tRNA (adenine-N(6)-)-methyltransferase family.

The protein resides in the cytoplasm. It carries out the reaction adenosine(37) in tRNA1(Val) + S-adenosyl-L-methionine = N(6)-methyladenosine(37) in tRNA1(Val) + S-adenosyl-L-homocysteine + H(+). Specifically methylates the adenine in position 37 of tRNA(1)(Val) (anticodon cmo5UAC). In Escherichia coli O6:K15:H31 (strain 536 / UPEC), this protein is tRNA1(Val) (adenine(37)-N6)-methyltransferase.